Reading from the N-terminus, the 151-residue chain is ATP synthase subunit b' (151 aa).

Residues 18 to 38 (TLPLMALQVVLLTFILNALFF) form a helical membrane-spanning segment.

Belongs to the ATPase B chain family. In terms of assembly, F-type ATPases have 2 components, F(1) - the catalytic core - and F(0) - the membrane proton channel. F(1) has five subunits: alpha(3), beta(3), gamma(1), delta(1), epsilon(1). F(0) has four main subunits: a(1), b(1), b'(1) and c(10-14). The alpha and beta chains form an alternating ring which encloses part of the gamma chain. F(1) is attached to F(0) by a central stalk formed by the gamma and epsilon chains, while a peripheral stalk is formed by the delta, b and b' chains.

The protein resides in the cellular thylakoid membrane. Functionally, f(1)F(0) ATP synthase produces ATP from ADP in the presence of a proton or sodium gradient. F-type ATPases consist of two structural domains, F(1) containing the extramembraneous catalytic core and F(0) containing the membrane proton channel, linked together by a central stalk and a peripheral stalk. During catalysis, ATP synthesis in the catalytic domain of F(1) is coupled via a rotary mechanism of the central stalk subunits to proton translocation. Its function is as follows. Component of the F(0) channel, it forms part of the peripheral stalk, linking F(1) to F(0). The b'-subunit is a diverged and duplicated form of b found in plants and photosynthetic bacteria. This Prochlorococcus marinus (strain MIT 9313) protein is ATP synthase subunit b'.